The primary structure comprises 126 residues: Large ribosomal subunit protein uL22 (126 aa).

Belongs to the universal ribosomal protein uL22 family. Part of the 50S ribosomal subunit.

Its function is as follows. This protein binds specifically to 23S rRNA; its binding is stimulated by other ribosomal proteins, e.g. L4, L17, and L20. It is important during the early stages of 50S assembly. It makes multiple contacts with different domains of the 23S rRNA in the assembled 50S subunit and ribosome. In terms of biological role, the globular domain of the protein is located near the polypeptide exit tunnel on the outside of the subunit, while an extended beta-hairpin is found that lines the wall of the exit tunnel in the center of the 70S ribosome. In Prochlorococcus marinus (strain NATL2A), this protein is Large ribosomal subunit protein uL22.